Consider the following 263-residue polypeptide: 3-methyl-2-oxobutanoate hydroxymethyltransferase (263 aa).

2 residues coordinate Mg(2+): aspartate 45 and aspartate 84. Residues 45–46 (DS), aspartate 84, and lysine 112 contribute to the 3-methyl-2-oxobutanoate site. Glutamate 114 is a Mg(2+) binding site. Glutamate 181 (proton acceptor) is an active-site residue.

It belongs to the PanB family. In terms of assembly, homodecamer; pentamer of dimers. The cofactor is Mg(2+).

The protein resides in the cytoplasm. The enzyme catalyses 3-methyl-2-oxobutanoate + (6R)-5,10-methylene-5,6,7,8-tetrahydrofolate + H2O = 2-dehydropantoate + (6S)-5,6,7,8-tetrahydrofolate. It functions in the pathway cofactor biosynthesis; (R)-pantothenate biosynthesis; (R)-pantoate from 3-methyl-2-oxobutanoate: step 1/2. In terms of biological role, catalyzes the reversible reaction in which hydroxymethyl group from 5,10-methylenetetrahydrofolate is transferred onto alpha-ketoisovalerate to form ketopantoate. The sequence is that of 3-methyl-2-oxobutanoate hydroxymethyltransferase from Chromohalobacter salexigens (strain ATCC BAA-138 / DSM 3043 / CIP 106854 / NCIMB 13768 / 1H11).